The chain runs to 234 residues: Bradykinin-releasing enzyme KR-E-1 (234 aa).

The Peptidase S1 domain occupies 1–225 (VIGGDECNIN…YSDWIQSIIA (225 aa)). Intrachain disulfides connect C7–C139, C26–C42, C74–C232, C118–C186, C150–C165, and C176–C201. N-linked (GlcNAc...) asparagine glycosylation occurs at N20. Residues H41 and D86 each act as charge relay system in the active site. S180 (charge relay system) is an active-site residue.

The protein belongs to the peptidase S1 family. Snake venom subfamily. In terms of assembly, monomer. Expressed by the venom gland.

It is found in the secreted. In terms of biological role, bradykinin-releasing enzyme. Releases bradykinin from bovine HMW kininogen. Has anticoagulant activity. Increases permeability of capillaries by intradermal injection into rabbits. The polypeptide is Bradykinin-releasing enzyme KR-E-1 (Gloydius ussuriensis (Ussuri mamushi)).